The chain runs to 236 residues: tRNA1(Val) (adenine(37)-N6)-methyltransferase (236 aa).

It belongs to the methyltransferase superfamily. tRNA (adenine-N(6)-)-methyltransferase family.

The protein localises to the cytoplasm. The enzyme catalyses adenosine(37) in tRNA1(Val) + S-adenosyl-L-methionine = N(6)-methyladenosine(37) in tRNA1(Val) + S-adenosyl-L-homocysteine + H(+). Its function is as follows. Specifically methylates the adenine in position 37 of tRNA(1)(Val) (anticodon cmo5UAC). In Actinobacillus succinogenes (strain ATCC 55618 / DSM 22257 / CCUG 43843 / 130Z), this protein is tRNA1(Val) (adenine(37)-N6)-methyltransferase.